Reading from the N-terminus, the 585-residue chain is A-type ATP synthase subunit A (585 aa).

235–242 (GPFGSGKT) provides a ligand contact to ATP.

This sequence belongs to the ATPase alpha/beta chains family. As to quaternary structure, has multiple subunits with at least A(3), B(3), C, D, E, F, H, I and proteolipid K(x).

The protein localises to the cell membrane. The catalysed reaction is ATP + H2O + 4 H(+)(in) = ADP + phosphate + 5 H(+)(out). Its function is as follows. Component of the A-type ATP synthase that produces ATP from ADP in the presence of a proton gradient across the membrane. The A chain is the catalytic subunit. This Halobacterium salinarum (strain ATCC 29341 / DSM 671 / R1) protein is A-type ATP synthase subunit A.